A 78-amino-acid chain; its full sequence is Small ribosomal subunit protein bS18 (78 aa).

It belongs to the bacterial ribosomal protein bS18 family. As to quaternary structure, part of the 30S ribosomal subunit. Forms a tight heterodimer with protein bS6.

Its function is as follows. Binds as a heterodimer with protein bS6 to the central domain of the 16S rRNA, where it helps stabilize the platform of the 30S subunit. The sequence is that of Small ribosomal subunit protein bS18 from Frankia casuarinae (strain DSM 45818 / CECT 9043 / HFP020203 / CcI3).